Here is an 860-residue protein sequence, read N- to C-terminus: Probable leucine--tRNA ligase, cytoplasmic (860 aa).

A 'HIGH' region motif is present at residues 41 to 51 (PYMNGKLHLGH). The 'KMSKS' region motif lies at 552 to 556 (KMSKS). An ATP-binding site is contributed by Lys555.

It belongs to the class-I aminoacyl-tRNA synthetase family.

It is found in the cytoplasm. The catalysed reaction is tRNA(Leu) + L-leucine + ATP = L-leucyl-tRNA(Leu) + AMP + diphosphate. The chain is Probable leucine--tRNA ligase, cytoplasmic from Enterocytozoon bieneusi (strain H348) (Microsporidian parasite).